We begin with the raw amino-acid sequence, 241 residues long: 1-(5-phosphoribosyl)-5-[(5-phosphoribosylamino)methylideneamino] imidazole-4-carboxamide isomerase (241 aa).

The active-site Proton acceptor is aspartate 10. The Proton donor role is filled by aspartate 131.

The protein belongs to the HisA/HisF family.

It localises to the cytoplasm. The catalysed reaction is 1-(5-phospho-beta-D-ribosyl)-5-[(5-phospho-beta-D-ribosylamino)methylideneamino]imidazole-4-carboxamide = 5-[(5-phospho-1-deoxy-D-ribulos-1-ylimino)methylamino]-1-(5-phospho-beta-D-ribosyl)imidazole-4-carboxamide. Its pathway is amino-acid biosynthesis; L-histidine biosynthesis; L-histidine from 5-phospho-alpha-D-ribose 1-diphosphate: step 4/9. In Bifidobacterium longum (strain NCC 2705), this protein is 1-(5-phosphoribosyl)-5-[(5-phosphoribosylamino)methylideneamino] imidazole-4-carboxamide isomerase.